The chain runs to 498 residues: Tumor necrosis factor receptor superfamily member 8 (498 aa).

Positions 1–18 (MSALLTAAGLLFLGMLQA) are cleaved as a signal peptide. Residues 19 to 287 (FPTDRPLKTT…STGTPFLDPG (269 aa)) lie on the Extracellular side of the membrane. 2 TNFR-Cys repeats span residues 68–105 (QCAP…PRIC) and 106–146 (ECQP…DTIC). 5 cysteine pairs are disulfide-bonded: cysteine 69-cysteine 81, cysteine 84-cysteine 97, cysteine 87-cysteine 105, cysteine 107-cysteine 121, and cysteine 128-cysteine 146. Positions 142–168 (KDTICELPSSGSGPNCSNPGDRKTLTS) are disordered. Positions 149–160 (PSSGSGPNCSNP) are enriched in low complexity. Asparagine 156, asparagine 183, and asparagine 229 each carry an N-linked (GlcNAc...) asparagine glycan. Residues 204 to 256 (ELVKVPESSSSKAREPSPDPGNAEKNMTLELPSPGTLPDISTSENSKEPASTA) form a disordered region. Over residues 242 to 256 (DISTSENSKEPASTA) the composition is skewed to polar residues. A helical membrane pass occupies residues 288 to 308 (PVLFWVAMVVLLVGSGSFLLC). Topologically, residues 309–498 (YWKACRRRFQ…DHGPTTVSEK (190 aa)) are cytoplasmic. Positions 338–358 (DSCPTEKLTQPQRSGSVTDPS) are enriched in polar residues. 3 disordered regions span residues 338–370 (DSCP…SPPP), 389–411 (LDDS…VSTE), and 436–498 (EVPE…VSEK). Serine 339 and serine 353 each carry phosphoserine. 3 stretches are compositionally biased toward basic and acidic residues: residues 402–411 (EPPEPRVSTE), 456–465 (EVDHAPHYPE), and 484–498 (EGGK…VSEK).

Belongs to the TNFR8 family. In terms of assembly, interacts with TRAF1, TRAF2, TRAF3 and TRAF5. Detected in thymus and in activated splenocytes.

The protein localises to the cell membrane. In terms of biological role, receptor for TNFSF8/CD30L. May play a role in the regulation of cellular growth and transformation of activated lymphoblasts. Regulates gene expression through activation of NF-kappa-B. The sequence is that of Tumor necrosis factor receptor superfamily member 8 from Mus musculus (Mouse).